Here is a 141-residue protein sequence, read N- to C-terminus: Nucleoside diphosphate kinase (141 aa).

ATP is bound by residues Lys-9, Phe-57, Arg-85, Thr-91, Arg-102, and Asn-112. The Pros-phosphohistidine intermediate role is filled by His-115.

This sequence belongs to the NDK family. As to quaternary structure, homotetramer. It depends on Mg(2+) as a cofactor.

It is found in the cytoplasm. The enzyme catalyses a 2'-deoxyribonucleoside 5'-diphosphate + ATP = a 2'-deoxyribonucleoside 5'-triphosphate + ADP. The catalysed reaction is a ribonucleoside 5'-diphosphate + ATP = a ribonucleoside 5'-triphosphate + ADP. Its function is as follows. Major role in the synthesis of nucleoside triphosphates other than ATP. The ATP gamma phosphate is transferred to the NDP beta phosphate via a ping-pong mechanism, using a phosphorylated active-site intermediate. The polypeptide is Nucleoside diphosphate kinase (Chlamydia caviae (strain ATCC VR-813 / DSM 19441 / 03DC25 / GPIC) (Chlamydophila caviae)).